The following is a 314-amino-acid chain: tRNA dimethylallyltransferase 1 (314 aa).

17–24 contributes to the ATP binding site; it reads GPTAAGKT. 19–24 serves as a coordination point for substrate; it reads TAAGKT. An interaction with substrate tRNA region spans residues 42-45; it reads DSRQ.

It belongs to the IPP transferase family. Monomer. The cofactor is Mg(2+).

The enzyme catalyses adenosine(37) in tRNA + dimethylallyl diphosphate = N(6)-dimethylallyladenosine(37) in tRNA + diphosphate. Functionally, catalyzes the transfer of a dimethylallyl group onto the adenine at position 37 in tRNAs that read codons beginning with uridine, leading to the formation of N6-(dimethylallyl)adenosine (i(6)A). This is tRNA dimethylallyltransferase 1 from Syntrophotalea carbinolica (strain DSM 2380 / NBRC 103641 / GraBd1) (Pelobacter carbinolicus).